The primary structure comprises 345 residues: Uroporphyrinogen decarboxylase (345 aa).

Substrate is bound by residues 30-34 (RQAGR), aspartate 79, tyrosine 154, serine 209, and histidine 322.

It belongs to the uroporphyrinogen decarboxylase family. Homodimer.

It localises to the cytoplasm. It catalyses the reaction uroporphyrinogen III + 4 H(+) = coproporphyrinogen III + 4 CO2. It participates in porphyrin-containing compound metabolism; protoporphyrin-IX biosynthesis; coproporphyrinogen-III from 5-aminolevulinate: step 4/4. Its function is as follows. Catalyzes the decarboxylation of four acetate groups of uroporphyrinogen-III to yield coproporphyrinogen-III. The sequence is that of Uroporphyrinogen decarboxylase from Nocardioides sp. (strain ATCC BAA-499 / JS614).